The sequence spans 495 residues: Histidine--tRNA ligase (495 aa).

Over residues 1 to 10 the composition is skewed to polar residues; that stretch reads MTTDSEQPNT. Residues 1 to 24 form a disordered region; that stretch reads MTTDSEQPNTDFRPEARAPRGFAD. Basic and acidic residues predominate over residues 12–24; the sequence is FRPEARAPRGFAD.

Belongs to the class-II aminoacyl-tRNA synthetase family. In terms of assembly, homodimer.

It is found in the cytoplasm. It catalyses the reaction tRNA(His) + L-histidine + ATP = L-histidyl-tRNA(His) + AMP + diphosphate + H(+). This is Histidine--tRNA ligase (hisS) from Caulobacter vibrioides (strain ATCC 19089 / CIP 103742 / CB 15) (Caulobacter crescentus).